A 333-amino-acid chain; its full sequence is MDNARLNSFLEYPILGSGDSGTCSARVYSSDHGITTFQSCAVSANSCGGDDRFLGGRGVQITSPHHHHHHHHHPQPATYQTSGNLGVSYSHSSCGPSYGAQNFSAPYGPYGLNQEADVSGGYPPCAPAVYSGNLSSPMVQHHHHHQGYAGGTVGSPQYIHHSYGQEHQSLALATYNNSLSPLHASHQEACRSPASETSSPAQTFDWMKVKRNPPKTGKVGEYGYVGQPNAVRTNFTTKQLTELEKEFHFNKYLTRARSEIAASLQLNETQVKIWFQNRRMKQKKREKEGLLPMSPATPPGSDEKTEESSEKSSSSPSAPSPASSTSDTLTTSH.

The segment at 61–82 (ITSPHHHHHHHHHPQPATYQTS) is disordered. Basic residues predominate over residues 64 to 74 (PHHHHHHHHHP). The interval 74–202 (PQPATYQTSG…PASETSSPAQ (129 aa)) is interaction with OGT. An O-linked (GlcNAc) threonine glycan is attached at threonine 152. The short motif at 203-208 (TFDWMK) is the Antp-type hexapeptide element. The segment at residues 227-286 (QPNAVRTNFTTKQLTELEKEFHFNKYLTRARSEIAASLQLNETQVKIWFQNRRMKQKKRE) is a DNA-binding region (homeobox). Positions 279–333 (RMKQKKREKEGLLPMSPATPPGSDEKTEESSEKSSSSPSAPSPASSTSDTLTTSH) are disordered. Basic and acidic residues predominate over residues 301 to 310 (SDEKTEESSE). Positions 311–333 (KSSSSPSAPSPASSTSDTLTTSH) are enriched in low complexity.

Belongs to the Antp homeobox family. Labial subfamily. As to quaternary structure, interacts with OGT (via TPR repeats domain); the interaction takes place mainly in the nucleus. Forms a DNA-binding heterodimer with transcription factor PBX1. Post-translationally, glycosylated by OGT.

It is found in the nucleus. Its function is as follows. Sequence-specific transcription factor. Regulates multiple developmental processes including brainstem, inner and outer ear, abducens nerve and cardiovascular development and morphogenesis as well as cognition and behavior. Also part of a developmental regulatory system that provides cells with specific positional identities on the anterior-posterior axis. Acts on the anterior body structures. Seems to act in the maintenance and/or generation of hindbrain segments. Activates transcription in the presence of PBX1A and PKNOX1. This is Homeobox protein Hox-A1 (Hoxa1) from Rattus norvegicus (Rat).